The sequence spans 132 residues: Small ribosomal subunit protein uS8 (132 aa).

The protein belongs to the universal ribosomal protein uS8 family. As to quaternary structure, part of the 30S ribosomal subunit. Contacts proteins S5 and S12.

In terms of biological role, one of the primary rRNA binding proteins, it binds directly to 16S rRNA central domain where it helps coordinate assembly of the platform of the 30S subunit. This Rhizobium johnstonii (strain DSM 114642 / LMG 32736 / 3841) (Rhizobium leguminosarum bv. viciae) protein is Small ribosomal subunit protein uS8.